A 394-amino-acid chain; its full sequence is 3-amino-4-hydroxybenzoate 2-monooxygenase (394 aa).

FAD contacts are provided by Ala-16 and Arg-109. Tyr-214 functions as the Proton acceptor in the catalytic mechanism. Residue Asp-287 coordinates FAD.

Belongs to the 6-hydroxynicotinate 3-monooxygenase family. Requires FAD as cofactor.

The enzyme catalyses 3-amino-4-hydroxybenzoate + NADPH + O2 + H(+) = 3-amino-2,4-dihydroxybenzoate + NADP(+) + H2O. Its pathway is antibiotic biosynthesis. Functionally, part of a gene cluster involved in the biosynthesis of cremeomycin, a light-sensitive o-diazoquinone with antibacterial and antiproliferative effects. Catalyzes the hydroxylation of 3-amino-4-hydroxybenzoate (3,4-AHBA) to 3-amino-2,4-dihydroxybenzoate (3,2,4-ADHBA). This Streptomyces cremeus protein is 3-amino-4-hydroxybenzoate 2-monooxygenase.